The chain runs to 447 residues: Adenylosuccinate synthetase (447 aa).

GTP-binding positions include 12 to 18 and 40 to 42; these read GDEGKGK and GHT. The Proton acceptor role is filled by Asp-13. Positions 13 and 40 each coordinate Mg(2+). IMP-binding positions include 13–16, 38–41, Thr-128, Arg-142, Gln-223, Thr-238, and Arg-302; these read DEGK and NAGH. His-41 (proton donor) is an active-site residue. 298-304 contacts substrate; the sequence is TTTGRKR. GTP-binding positions include Arg-304, 330–332, and 412–414; these read KLD and SLG.

It belongs to the adenylosuccinate synthetase family. As to quaternary structure, homodimer. Requires Mg(2+) as cofactor.

It is found in the cytoplasm. It carries out the reaction IMP + L-aspartate + GTP = N(6)-(1,2-dicarboxyethyl)-AMP + GDP + phosphate + 2 H(+). It participates in purine metabolism; AMP biosynthesis via de novo pathway; AMP from IMP: step 1/2. In terms of biological role, plays an important role in the de novo pathway of purine nucleotide biosynthesis. Catalyzes the first committed step in the biosynthesis of AMP from IMP. This chain is Adenylosuccinate synthetase, found in Trichormus variabilis (strain ATCC 29413 / PCC 7937) (Anabaena variabilis).